The chain runs to 403 residues: Digeranylgeranylglycerophospholipid reductase 1 (403 aa).

FAD-binding residues include Ala-14, Asp-33, Cys-44, Ala-45, Gly-47, Arg-98, Val-122, Asp-277, Gly-289, and Ile-290.

Belongs to the geranylgeranyl reductase family. DGGGPL reductase subfamily. FAD is required as a cofactor.

The catalysed reaction is a 2,3-bis-O-phytanyl-sn-glycerol 1-phospholipid + 8 A = a 2,3-bis-O-(geranylgeranyl)-sn-glycerol 1-phospholipid + 8 AH2. It carries out the reaction 2,3-bis-O-(phytanyl)-sn-glycerol 1-phosphate + 8 A = 2,3-bis-O-(geranylgeranyl)-sn-glycerol 1-phosphate + 8 AH2. It catalyses the reaction CDP-2,3-bis-O-(geranylgeranyl)-sn-glycerol + 8 AH2 = CDP-2,3-bis-O-(phytanyl)-sn-glycerol + 8 A. The enzyme catalyses archaetidylserine + 8 AH2 = 2,3-bis-O-phytanyl-sn-glycero-3-phospho-L-serine + 8 A. Its pathway is membrane lipid metabolism; glycerophospholipid metabolism. Its function is as follows. Is involved in the reduction of 2,3-digeranylgeranylglycerophospholipids (unsaturated archaeols) into 2,3-diphytanylglycerophospholipids (saturated archaeols) in the biosynthesis of archaeal membrane lipids. Catalyzes the formation of archaetidic acid (2,3-di-O-phytanyl-sn-glyceryl phosphate) from 2,3-di-O-geranylgeranylglyceryl phosphate (DGGGP) via the hydrogenation of each double bond of the isoprenoid chains. Is also probably able to reduce double bonds of geranyl groups in CDP-2,3-bis-O-(geranylgeranyl)-sn-glycerol and archaetidylserine, thus acting at various stages in the biosynthesis of archaeal membrane lipids. The sequence is that of Digeranylgeranylglycerophospholipid reductase 1 from Methanosphaera stadtmanae (strain ATCC 43021 / DSM 3091 / JCM 11832 / MCB-3).